Here is a 242-residue protein sequence, read N- to C-terminus: tRNA uridine(34) hydroxylase (242 aa).

The region spanning 128-222 is the Rhodanese domain; it reads DGREVVMLDT…YFEETGGPGY (95 aa). Catalysis depends on Cys-182, which acts as the Cysteine persulfide intermediate.

It belongs to the TrhO family.

It catalyses the reaction uridine(34) in tRNA + AH2 + O2 = 5-hydroxyuridine(34) in tRNA + A + H2O. Its function is as follows. Catalyzes oxygen-dependent 5-hydroxyuridine (ho5U) modification at position 34 in tRNAs. In Bordetella avium (strain 197N), this protein is tRNA uridine(34) hydroxylase.